The following is a 293-amino-acid chain: Thiamine-monophosphate kinase (293 aa).

Residues glutamate 25, valine 39, aspartate 40, aspartate 68, and aspartate 113 each coordinate Mg(2+). ATP is bound by residues 112–113 and arginine 136; that span reads GD. Aspartate 194 is a Mg(2+) binding site. Residue serine 196 coordinates ATP. Aspartate 197 is a binding site for Mg(2+). 2 residues coordinate substrate: glutamate 243 and tryptophan 286.

It belongs to the thiamine-monophosphate kinase family. Homodimer.

The enzyme catalyses thiamine phosphate + ATP = thiamine diphosphate + ADP. The protein operates within cofactor biosynthesis; thiamine diphosphate biosynthesis; thiamine diphosphate from thiamine phosphate: step 1/1. Is inhibited by AMP; the mode of AMP inhibition is uncompetitive for both TMP and ATP. Its function is as follows. Catalyzes the ATP-dependent phosphorylation of thiamine-monophosphate (TMP) to form thiamine-pyrophosphate (TPP), the active form of vitamin B1. This chain is Thiamine-monophosphate kinase, found in Pyrobaculum calidifontis (strain DSM 21063 / JCM 11548 / VA1).